Reading from the N-terminus, the 173-residue chain is Large ribosomal subunit protein uL10 (173 aa).

The protein belongs to the universal ribosomal protein uL10 family. As to quaternary structure, part of the ribosomal stalk of the 50S ribosomal subunit. The N-terminus interacts with L11 and the large rRNA to form the base of the stalk. The C-terminus forms an elongated spine to which L12 dimers bind in a sequential fashion forming a multimeric L10(L12)X complex.

Forms part of the ribosomal stalk, playing a central role in the interaction of the ribosome with GTP-bound translation factors. This chain is Large ribosomal subunit protein uL10, found in Desulfatibacillum aliphaticivorans.